We begin with the raw amino-acid sequence, 63 residues long: Large ribosomal subunit protein bL35 (63 aa).

It belongs to the bacterial ribosomal protein bL35 family.

The polypeptide is Large ribosomal subunit protein bL35 (Thermobifida fusca (strain YX)).